Here is a 279-residue protein sequence, read N- to C-terminus: Movement protein (279 aa).

Residues 247–279 (ESEELNVESPPAAIGSSSASRSEAFRPQVVNGL) form a disordered region. The segment covering 254–268 (ESPPAAIGSSSASRS) has biased composition (low complexity).

It belongs to the cucumovirus movement protein family.

Its subcellular location is the host cell junction. It is found in the host plasmodesma. Its function is as follows. Transports viral genome to neighboring plant cells directly through plasmosdesmata, without any budding. The movement protein allows efficient cell to cell propagation, by bypassing the host cell wall barrier. Acts by forming a tubular structure at the host plasmodesmata, enlarging it enough to allow free passage of virion capsids. The sequence is that of Movement protein from Cucumis sativus (Cucumber).